The chain runs to 461 residues: Probable carboxypeptidase MGYG_04702 (461 aa).

An N-terminal signal peptide occupies residues Met-1–Ala-20. N-linked (GlcNAc...) asparagine glycans are attached at residues Asn-48 and Asn-99. Asp-176 provides a ligand contact to Zn(2+). Glu-208 acts as the Proton acceptor in catalysis. Residue Glu-209 coordinates Zn(2+). N-linked (GlcNAc...) asparagine glycosylation occurs at Asn-396.

This sequence belongs to the peptidase M20A family. Requires Zn(2+) as cofactor.

It is found in the secreted. The polypeptide is Probable carboxypeptidase MGYG_04702 (Arthroderma gypseum (strain ATCC MYA-4604 / CBS 118893) (Microsporum gypseum)).